An 83-amino-acid chain; its full sequence is Prolactin-releasing peptide (83 aa).

An N-terminal signal peptide occupies residues 1 to 21 (MALKTWLLCLLLLSLVLPGAS). F52 is subject to Phenylalanine amide. Residues 57–83 (ATPRDVTGLGQLSCLPLDGRTKFSQRG) constitute a propeptide that is removed on maturation.

Widely expressed, with highest levels in medulla oblongata and hypothalamus.

The protein resides in the secreted. In terms of biological role, stimulates prolactin (PRL) release and regulates the expression of prolactin through its receptor GPR10. May stimulate lactotrophs directly to secrete PRL. The protein is Prolactin-releasing peptide (Prlh) of Rattus norvegicus (Rat).